The sequence spans 443 residues: Postreplication repair E3 ubiquitin-protein ligase rad18 (443 aa).

The RING-type zinc-finger motif lies at Cys30–Arg68. Residues Gly106–Thr157 are disordered. Polar residues predominate over residues Thr143–Thr157. The UBZ4-type zinc-finger motif lies at Leu175–Glu202. Residues Cys178, Cys181, His193, and Cys197 each contribute to the Zn(2+) site. In terms of domain architecture, SAP spans Leu239–Trp273. Polar residues-rich tracts occupy residues Ile350–Ser363 and Pro431–His443. Positions Ile350–His443 are disordered.

This sequence belongs to the RAD18 family. As to quaternary structure, interacts with E2 UBC2, forming a complex with ubiquitin ligase activity.

Its subcellular location is the nucleus. It carries out the reaction S-ubiquitinyl-[E2 ubiquitin-conjugating enzyme]-L-cysteine + [acceptor protein]-L-lysine = [E2 ubiquitin-conjugating enzyme]-L-cysteine + N(6)-ubiquitinyl-[acceptor protein]-L-lysine.. It participates in protein modification; protein ubiquitination. In terms of biological role, E3 RING-finger protein, member of the UBC2/RAD6 epistasis group. Associates to the E2 ubiquitin conjugating enzyme UBC2/RAD6 to form the UBC2-RAD18 ubiquitin ligase complex involved in postreplicative repair (PRR) of damaged DNA. In Emericella nidulans (strain FGSC A4 / ATCC 38163 / CBS 112.46 / NRRL 194 / M139) (Aspergillus nidulans), this protein is Postreplication repair E3 ubiquitin-protein ligase rad18 (uvsH).